The primary structure comprises 253 residues: Indole-3-glycerol phosphate synthase (253 aa).

The protein belongs to the TrpC family.

The enzyme catalyses 1-(2-carboxyphenylamino)-1-deoxy-D-ribulose 5-phosphate + H(+) = (1S,2R)-1-C-(indol-3-yl)glycerol 3-phosphate + CO2 + H2O. The protein operates within amino-acid biosynthesis; L-tryptophan biosynthesis; L-tryptophan from chorismate: step 4/5. This chain is Indole-3-glycerol phosphate synthase, found in Bacillus thuringiensis subsp. konkukian (strain 97-27).